The chain runs to 194 residues: Small ribosomal subunit protein uS7 (194 aa).

Belongs to the universal ribosomal protein uS7 family. As to quaternary structure, part of the 30S ribosomal subunit.

Its function is as follows. One of the primary rRNA binding proteins, it binds directly to 16S rRNA where it nucleates assembly of the head domain of the 30S subunit. Is located at the subunit interface close to the decoding center. In Methanococcus vannielii (strain ATCC 35089 / DSM 1224 / JCM 13029 / OCM 148 / SB), this protein is Small ribosomal subunit protein uS7.